The chain runs to 325 residues: MAERKATNKYYPPDWDPSKGSINQYRGQHHLRDRARKIDQGILIIRFEMPFSVWCLGCECHIGMGVRFNAEKKTVDKYFTSNIYSFKMKCHQCSNQFEIQNDPKNTDYKLISGLKKRIEQFNPEDSELPSSFIIKYDDNNNNNNNNNNNDNNDTLLKLENKKLDIEKGKKESTQLEKLQEIMTNRTINDYQLSSIMRKSFREKKKEDQIELERQKSKGIMIPLLKENQDDIDTAKDIDFNSNSLKRKLDESNKLKRELIKNESILKSTNNVNNNNNVNNNNNNNNNNKIEAIIRKKSKIDPSLFNNNVNKNKSKVNETFTSNLFK.

Residues Leu156 to Glu262 adopt a coiled-coil conformation.

Belongs to the CWC16 family.

This Dictyostelium discoideum (Social amoeba) protein is Coiled-coil domain-containing protein 130 homolog.